A 274-amino-acid chain; its full sequence is S-adenosylmethionine-dependent nucleotide dehydratase (274 aa).

Residues 1 to 215 form the Radical SAM core domain; that stretch reads MAYKVNLHIT…VERHAEVSHD (215 aa). [4Fe-4S] cluster is bound by residues C13, C17, and C20.

The protein belongs to the radical SAM superfamily. Prokaryotic viperin family. The cofactor is [4Fe-4S] cluster.

It carries out the reaction CTP + AH2 + S-adenosyl-L-methionine = 3'-deoxy-3',4'-didehydro-CTP + 5'-deoxyadenosine + L-methionine + A + H2O + H(+). In terms of biological role, expression of pVip6 in E.coli (strain MG1655) confers resistance to phages lambda, P1, SECphi6, SECphi8 and T7. Catalyzes the conversion of cytidine triphosphate (CTP) to 3'-deoxy-3',4'-didehydro-CTP (ddhCTP), probably via a SAM-dependent radical mechanism. The modified nucleotide represses transcription from T7 RNA polymerase-directed genes (possibly by acting as chain terminators), strongly suggesting these nucleotides block viral polymerase transcription. The chain is S-adenosylmethionine-dependent nucleotide dehydratase from Selenomonas ruminantium.